Consider the following 461-residue polypeptide: Asparagine--tRNA ligase (461 aa).

This sequence belongs to the class-II aminoacyl-tRNA synthetase family. In terms of assembly, homodimer.

The protein resides in the cytoplasm. It carries out the reaction tRNA(Asn) + L-asparagine + ATP = L-asparaginyl-tRNA(Asn) + AMP + diphosphate + H(+). This chain is Asparagine--tRNA ligase, found in Geobacter sulfurreducens (strain ATCC 51573 / DSM 12127 / PCA).